Consider the following 398-residue polypeptide: 1-deoxy-D-xylulose 5-phosphate reductoisomerase (398 aa).

Positions 10, 11, 12, 13, 36, 37, 38, and 124 each coordinate NADPH. Residue Lys-125 coordinates 1-deoxy-D-xylulose 5-phosphate. Glu-126 contributes to the NADPH binding site. Asp-150 contributes to the Mn(2+) binding site. Positions 151, 152, 186, and 209 each coordinate 1-deoxy-D-xylulose 5-phosphate. Residue Glu-152 participates in Mn(2+) binding. Gly-215 lines the NADPH pocket. The 1-deoxy-D-xylulose 5-phosphate site is built by Ser-222, Asn-227, Lys-228, and Glu-231. Glu-231 is a Mn(2+) binding site.

Belongs to the DXR family. In terms of assembly, homodimer. The cofactor is Mg(2+). Mn(2+) serves as cofactor.

The catalysed reaction is 2-C-methyl-D-erythritol 4-phosphate + NADP(+) = 1-deoxy-D-xylulose 5-phosphate + NADPH + H(+). Its pathway is isoprenoid biosynthesis; isopentenyl diphosphate biosynthesis via DXP pathway; isopentenyl diphosphate from 1-deoxy-D-xylulose 5-phosphate: step 1/6. Catalyzes the NADPH-dependent rearrangement and reduction of 1-deoxy-D-xylulose-5-phosphate (DXP) to 2-C-methyl-D-erythritol 4-phosphate (MEP). The chain is 1-deoxy-D-xylulose 5-phosphate reductoisomerase from Yersinia enterocolitica serotype O:8 / biotype 1B (strain NCTC 13174 / 8081).